A 165-amino-acid polypeptide reads, in one-letter code: Nucleotide-binding protein LBF_1338 (165 aa).

It belongs to the YajQ family.

In terms of biological role, nucleotide-binding protein. The protein is Nucleotide-binding protein LBF_1338 of Leptospira biflexa serovar Patoc (strain Patoc 1 / Ames).